The sequence spans 36 residues: Protein YnfP (36 aa).

This is Protein YnfP from Escherichia coli (strain K12).